A 488-amino-acid polypeptide reads, in one-letter code: Mannitol 2-dehydrogenase (488 aa).

Residue 37-48 participates in NAD(+) binding; that stretch reads IVHVGVGGFHRA.

Belongs to the mannitol dehydrogenase family. As to quaternary structure, monomer.

The enzyme catalyses D-mannitol + NAD(+) = D-fructose + NADH + H(+). In terms of biological role, catalyzes the NAD(H)-dependent interconversion of D-fructose and D-mannitol in the mannitol metabolic pathway. This is Mannitol 2-dehydrogenase from Aspergillus niger (strain ATCC MYA-4892 / CBS 513.88 / FGSC A1513).